Reading from the N-terminus, the 449-residue chain is ATP-dependent protease ATPase subunit HslU (449 aa).

ATP is bound by residues Ile18, 60–65 (GVGKTE), Asp261, Glu327, and Arg399.

This sequence belongs to the ClpX chaperone family. HslU subfamily. As to quaternary structure, a double ring-shaped homohexamer of HslV is capped on each side by a ring-shaped HslU homohexamer. The assembly of the HslU/HslV complex is dependent on binding of ATP.

The protein localises to the cytoplasm. Functionally, ATPase subunit of a proteasome-like degradation complex; this subunit has chaperone activity. The binding of ATP and its subsequent hydrolysis by HslU are essential for unfolding of protein substrates subsequently hydrolyzed by HslV. HslU recognizes the N-terminal part of its protein substrates and unfolds these before they are guided to HslV for hydrolysis. This chain is ATP-dependent protease ATPase subunit HslU, found in Oleidesulfovibrio alaskensis (strain ATCC BAA-1058 / DSM 17464 / G20) (Desulfovibrio alaskensis).